The following is a 245-amino-acid chain: Acetylglutamate kinase (245 aa).

Residues 41–42 (GG), arginine 63, and asparagine 156 each bind substrate.

It belongs to the acetylglutamate kinase family. ArgB subfamily.

The protein localises to the cytoplasm. It carries out the reaction N-acetyl-L-glutamate + ATP = N-acetyl-L-glutamyl 5-phosphate + ADP. It functions in the pathway amino-acid biosynthesis; L-arginine biosynthesis; N(2)-acetyl-L-ornithine from L-glutamate: step 2/4. Its function is as follows. Catalyzes the ATP-dependent phosphorylation of N-acetyl-L-glutamate. The sequence is that of Acetylglutamate kinase from Staphylococcus epidermidis (strain ATCC 35984 / DSM 28319 / BCRC 17069 / CCUG 31568 / BM 3577 / RP62A).